The primary structure comprises 792 residues: Endonuclease MutS2 (792 aa).

Residue 334–341 coordinates ATP; it reads GPNTGGKT. Positions 717 to 792 constitute a Smr domain; the sequence is INLIGKTTDE…DAGVTIATFK (76 aa).

The protein belongs to the DNA mismatch repair MutS family. MutS2 subfamily. In terms of assembly, homodimer. Binds to stalled ribosomes, contacting rRNA.

Functionally, endonuclease that is involved in the suppression of homologous recombination and thus may have a key role in the control of bacterial genetic diversity. In terms of biological role, acts as a ribosome collision sensor, splitting the ribosome into its 2 subunits. Detects stalled/collided 70S ribosomes which it binds and splits by an ATP-hydrolysis driven conformational change. Acts upstream of the ribosome quality control system (RQC), a ribosome-associated complex that mediates the extraction of incompletely synthesized nascent chains from stalled ribosomes and their subsequent degradation. Probably generates substrates for RQC. The chain is Endonuclease MutS2 from Agathobacter rectalis (strain ATCC 33656 / DSM 3377 / JCM 17463 / KCTC 5835 / VPI 0990) (Eubacterium rectale).